Consider the following 236-residue polypeptide: Leucyl/phenylalanyl-tRNA--protein transferase (236 aa).

Belongs to the L/F-transferase family.

The protein resides in the cytoplasm. It carries out the reaction N-terminal L-lysyl-[protein] + L-leucyl-tRNA(Leu) = N-terminal L-leucyl-L-lysyl-[protein] + tRNA(Leu) + H(+). The catalysed reaction is N-terminal L-arginyl-[protein] + L-leucyl-tRNA(Leu) = N-terminal L-leucyl-L-arginyl-[protein] + tRNA(Leu) + H(+). The enzyme catalyses L-phenylalanyl-tRNA(Phe) + an N-terminal L-alpha-aminoacyl-[protein] = an N-terminal L-phenylalanyl-L-alpha-aminoacyl-[protein] + tRNA(Phe). In terms of biological role, functions in the N-end rule pathway of protein degradation where it conjugates Leu, Phe and, less efficiently, Met from aminoacyl-tRNAs to the N-termini of proteins containing an N-terminal arginine or lysine. This is Leucyl/phenylalanyl-tRNA--protein transferase from Shewanella sp. (strain MR-7).